The primary structure comprises 1607 residues: Putative molluscan insulin-related peptide(s) receptor (1607 aa).

Positions 1-35 (MHPGSISFNMIINKCIPICLFILFIMMMEFTVSKA) are cleaved as a signal peptide. N-linked (GlcNAc...) asparagine glycans are attached at residues Asn82, Asn188, Asn245, Asn275, Asn332, Asn343, Asn495, Asn520, Asn663, Asn710, Asn778, Asn796, Asn802, Asn868, Asn879, Asn940, and Asn953. 3 Fibronectin type-III domains span residues 517 to 632 (HDLN…TYPF), 636 to 726 (EPTD…SKEE), and 756 to 861 (LPDE…TKDS). The Extracellular portion of the chain corresponds to 698-975 (EKVKIEEEGK…RPPDPESSNT (278 aa)). The Fibronectin type-III 4 domain occupies 870–967 (TTVDTEIETN…LERFFIVPRP (98 aa)). A helical transmembrane segment spans residues 976 to 996 (LLIVAIVLAFFGVLTVSLIVA). Topologically, residues 997–1607 (CVYYKQKIRS…WSTLKMVLVL (611 aa)) are cytoplasmic. The 272-residue stretch at 1037-1308 (IKLIKELGQG…AIIEYLLPKL (272 aa)) folds into the Protein kinase domain. ATP-binding positions include 1043 to 1051 (LGQGSFGMV) and Lys1072. Asp1173 (proton acceptor) is an active-site residue. Residue Tyr1199 is modified to Phosphotyrosine; by autocatalysis. 2 disordered regions span residues 1328 to 1352 (GAGE…LSCE) and 1501 to 1539 (TLNG…SSSW). Residues 1503–1515 (NGNQSSHNNNSFE) are compositionally biased toward polar residues. Residues 1524–1538 (SGPASESSNGVSSSS) are compositionally biased toward low complexity.

It belongs to the protein kinase superfamily. Tyr protein kinase family. Insulin receptor subfamily. Probable tetramer of 2 alpha and 2 beta chains linked by disulfide bonds. The alpha chains contribute to the formation of the ligand-binding domain, while the beta chains carry the kinase domain. The cofactor is Mn(2+).

It localises to the membrane. It carries out the reaction L-tyrosyl-[protein] + ATP = O-phospho-L-tyrosyl-[protein] + ADP + H(+). This receptor probably binds to the four different molluscan insulin-related peptides and has a tyrosine-protein kinase activity. In Lymnaea stagnalis (Great pond snail), this protein is Putative molluscan insulin-related peptide(s) receptor.